The primary structure comprises 201 residues: Small ribosomal subunit protein uS4c (201 aa).

The S4 RNA-binding domain occupies 89–157 (MRLDNILFRL…VQNYIASSDP (69 aa)).

It belongs to the universal ribosomal protein uS4 family. Part of the 30S ribosomal subunit. Contacts protein S5. The interaction surface between S4 and S5 is involved in control of translational fidelity.

It is found in the plastid. The protein localises to the chloroplast. Its function is as follows. One of the primary rRNA binding proteins, it binds directly to 16S rRNA where it nucleates assembly of the body of the 30S subunit. With S5 and S12 plays an important role in translational accuracy. This chain is Small ribosomal subunit protein uS4c (rps4), found in Hordeum vulgare (Barley).